The sequence spans 347 residues: Chlorophyll a/b light-harvesting protein PcbB (347 aa).

The next 6 membrane-spanning stretches (helical) occupy residues 25–45 (GLWL…AGAI), 64–84 (LILI…GVVV), 91–111 (AIGA…IFHV), 206–226 (LASG…WHIT), 247–267 (LSSA…FSAV), and 308–328 (LCNV…WHAI).

The protein belongs to the PsbB/PsbC family. IsiA/Pcb subfamily. In terms of assembly, the antenna complex consists of chlorophylls (a and b) and chlorophyll a/b binding proteins. Chlorophyll a is required as a cofactor. It depends on chlorophyll b as a cofactor.

It is found in the cellular thylakoid membrane. In terms of biological role, the antenna complex functions as a light receptor, it captures and delivers excitation energy to photosystems II and I. The Prochlorales pcb genes are not related to higher plant LHCs. This chain is Chlorophyll a/b light-harvesting protein PcbB (pcbB), found in Prochlorothrix hollandica.